The sequence spans 390 residues: Queuine tRNA-ribosyltransferase (390 aa).

D92 serves as the catalytic Proton acceptor. Residues D92–F96, D146, Q195, and G222 each bind substrate. Residues G253–D259 are RNA binding. D272 acts as the Nucleophile in catalysis. Positions T277–R281 are RNA binding; important for wobble base 34 recognition. Zn(2+) contacts are provided by C310, C312, C315, and H354.

Belongs to the queuine tRNA-ribosyltransferase family. As to quaternary structure, homodimer. Within each dimer, one monomer is responsible for RNA recognition and catalysis, while the other monomer binds to the replacement base PreQ1. It depends on Zn(2+) as a cofactor.

The catalysed reaction is 7-aminomethyl-7-carbaguanine + guanosine(34) in tRNA = 7-aminomethyl-7-carbaguanosine(34) in tRNA + guanine. Its pathway is tRNA modification; tRNA-queuosine biosynthesis. Functionally, catalyzes the base-exchange of a guanine (G) residue with the queuine precursor 7-aminomethyl-7-deazaguanine (PreQ1) at position 34 (anticodon wobble position) in tRNAs with GU(N) anticodons (tRNA-Asp, -Asn, -His and -Tyr). Catalysis occurs through a double-displacement mechanism. The nucleophile active site attacks the C1' of nucleotide 34 to detach the guanine base from the RNA, forming a covalent enzyme-RNA intermediate. The proton acceptor active site deprotonates the incoming PreQ1, allowing a nucleophilic attack on the C1' of the ribose to form the product. After dissociation, two additional enzymatic reactions on the tRNA convert PreQ1 to queuine (Q), resulting in the hypermodified nucleoside queuosine (7-(((4,5-cis-dihydroxy-2-cyclopenten-1-yl)amino)methyl)-7-deazaguanosine). In Acidovorax sp. (strain JS42), this protein is Queuine tRNA-ribosyltransferase.